The primary structure comprises 505 residues: MSTHTARPLGPQLALAGTVGKRVDVLVIGLTSASDGPEIALGDGIVDESVLTGLLDTLVAVGASGKAEETTRIPAPDTLPVDSVLAVGLGSAEKLDAEQIRKSAGAAARSLSGVGTVATTLSVLDLGAAAEGFALGAYRFNEFKSAKSAPGPDAQPVSRVELLVSSPRAKESKETLARSAAIAEAVATAREFVNTPPSHLFPAEFADRAKALGTDAGLKVEVLDEKALEKNGYGGILGVGKGSSRLPRLVRLSYSAKKRNAPKVALVGKGITFDTGGISIKPAAGMENMTSDMGGAAAVVATVVLAAKLGLPVDVTATVPMAENMPSSTAQRPGDVLTQYGGTTVEVINTDAEGRLVLADAIVRACEDDPDYLIDTATLTGAQMVALGNRTPGVMGTDEFRDRVAAISQEIGENAWAMPMPAELRSDLDSKVADLANVTNHRWGGMLAAALYLKEFVADGVQWAHIDVAGPAYNSSGPWGYTGRGGTGVPVRTMISVIEDIAANG.

2 residues coordinate Mn(2+): Lys-269 and Asp-274. Residue Lys-281 is part of the active site. Mn(2+)-binding residues include Asp-292, Asp-351, and Glu-353. Arg-355 is an active-site residue.

Belongs to the peptidase M17 family. Mn(2+) serves as cofactor.

It is found in the cytoplasm. The catalysed reaction is Release of an N-terminal amino acid, Xaa-|-Yaa-, in which Xaa is preferably Leu, but may be other amino acids including Pro although not Arg or Lys, and Yaa may be Pro. Amino acid amides and methyl esters are also readily hydrolyzed, but rates on arylamides are exceedingly low.. It carries out the reaction Release of an N-terminal amino acid, preferentially leucine, but not glutamic or aspartic acids.. Its function is as follows. Presumably involved in the processing and regular turnover of intracellular proteins. Catalyzes the removal of unsubstituted N-terminal amino acids from various peptides. The chain is Probable cytosol aminopeptidase from Rhodococcus jostii (strain RHA1).